A 299-amino-acid polypeptide reads, in one-letter code: Tyrosine recombinase XerC (299 aa).

The 85-residue stretch at 1 to 85 (MERQLEAYCA…AVRGLYRYLN (85 aa)) folds into the Core-binding (CB) domain. One can recognise a Tyr recombinase domain in the interval 106-285 (RLPKTLDTDR…DFQHLAAVYD (180 aa)). Residues Arg-146, Lys-170, His-237, Arg-240, and His-263 contribute to the active site. Tyr-272 serves as the catalytic O-(3'-phospho-DNA)-tyrosine intermediate.

Belongs to the 'phage' integrase family. XerC subfamily. As to quaternary structure, forms a cyclic heterotetrameric complex composed of two molecules of XerC and two molecules of XerD.

It is found in the cytoplasm. Functionally, site-specific tyrosine recombinase, which acts by catalyzing the cutting and rejoining of the recombining DNA molecules. The XerC-XerD complex is essential to convert dimers of the bacterial chromosome into monomers to permit their segregation at cell division. It also contributes to the segregational stability of plasmids. The polypeptide is Tyrosine recombinase XerC (Pseudomonas entomophila (strain L48)).